Here is a 341-residue protein sequence, read N- to C-terminus: Fructose-1,6-bisphosphatase, cytosolic (341 aa).

The Mg(2+) site is built by E71, E100, D121, L123, and D124. Substrate-binding positions include D124–S127, N215, Y247, Y267, and K277. E283 contributes to the Mg(2+) binding site.

This sequence belongs to the FBPase class 1 family. The cofactor is Mg(2+).

The protein resides in the cytoplasm. The catalysed reaction is beta-D-fructose 1,6-bisphosphate + H2O = beta-D-fructose 6-phosphate + phosphate. The polypeptide is Fructose-1,6-bisphosphatase, cytosolic (Spinacia oleracea (Spinach)).